Reading from the N-terminus, the 267-residue chain is Indole-3-glycerol phosphate synthase (267 aa).

It belongs to the TrpC family.

The enzyme catalyses 1-(2-carboxyphenylamino)-1-deoxy-D-ribulose 5-phosphate + H(+) = (1S,2R)-1-C-(indol-3-yl)glycerol 3-phosphate + CO2 + H2O. The protein operates within amino-acid biosynthesis; L-tryptophan biosynthesis; L-tryptophan from chorismate: step 4/5. This chain is Indole-3-glycerol phosphate synthase, found in Verminephrobacter eiseniae (strain EF01-2).